The primary structure comprises 365 residues: S-adenosylmethionine:tRNA ribosyltransferase-isomerase (365 aa).

This sequence belongs to the QueA family. In terms of assembly, monomer.

The protein resides in the cytoplasm. It catalyses the reaction 7-aminomethyl-7-carbaguanosine(34) in tRNA + S-adenosyl-L-methionine = epoxyqueuosine(34) in tRNA + adenine + L-methionine + 2 H(+). It participates in tRNA modification; tRNA-queuosine biosynthesis. Transfers and isomerizes the ribose moiety from AdoMet to the 7-aminomethyl group of 7-deazaguanine (preQ1-tRNA) to give epoxyqueuosine (oQ-tRNA). This is S-adenosylmethionine:tRNA ribosyltransferase-isomerase from Rickettsia africae (strain ESF-5).